The chain runs to 274 residues: Protein TIC 20-I, chloroplastic (274 aa).

Residues 1–65 (MITGYSTPSA…ELPRVSRGVP (65 aa)) constitute a chloroplast transit peptide. Helical transmembrane passes span 130 to 152 (LPYLMPLHETWMYAETAYHLHPF), 167 to 187 (IGRLPSWFLMAYFFVAYLGIV), 200 to 220 (VVMGMLLEIALQVIGTVSKWM), and 229 to 249 (FGMHFWTAVAFAYLFTVLESI).

The protein belongs to the Tic20 family. As to quaternary structure, part of the Tic complex. Component of the 1-MD complex, composed of TIC20-I, TIC214, TIC100 and TIC56. Interacts with the translocating preproteins. Hydrolysis of ATP is essential for the formation of this complex. The 1-MD complex interacts with TIC21. In terms of tissue distribution, expressed in leaves, shoots and roots. High expression in mature photosynthetic tissues. Lower levels in non-photosynthetic tissues and roots.

It is found in the plastid. The protein localises to the chloroplast inner membrane. Involved in protein precursor import into chloroplasts. May be part of an intermediate translocation complex acting as a protein-conducting channel at the inner envelope. Seems to be specific for photosynthesis-related pre-proteins. Partially redundant with TIC20-IV, but not with TIC20-II or TIC20-V. This chain is Protein TIC 20-I, chloroplastic, found in Arabidopsis thaliana (Mouse-ear cress).